The following is a 102-amino-acid chain: Large ribosomal subunit protein bL21 (102 aa).

The protein belongs to the bacterial ribosomal protein bL21 family. As to quaternary structure, part of the 50S ribosomal subunit. Contacts protein L20.

In terms of biological role, this protein binds to 23S rRNA in the presence of protein L20. The protein is Large ribosomal subunit protein bL21 of Geotalea uraniireducens (strain Rf4) (Geobacter uraniireducens).